Here is a 400-residue protein sequence, read N- to C-terminus: Serine/threonine-protein kinase AFC3 (400 aa).

Residues 1–29 (MIANGFESMDKERVRKRPRMTWDEAPAEP) are disordered. The region spanning 71-396 (YKILSKMGEG…ANEALDHPFF (326 aa)) is the Protein kinase domain. ATP-binding positions include 77-85 (MGEGTFGRV) and K100. The active-site Proton acceptor is D196.

This sequence belongs to the protein kinase superfamily. CMGC Ser/Thr protein kinase family. Lammer subfamily.

The enzyme catalyses L-seryl-[protein] + ATP = O-phospho-L-seryl-[protein] + ADP + H(+). It catalyses the reaction L-threonyl-[protein] + ATP = O-phospho-L-threonyl-[protein] + ADP + H(+). It carries out the reaction L-tyrosyl-[protein] + ATP = O-phospho-L-tyrosyl-[protein] + ADP + H(+). The protein is Serine/threonine-protein kinase AFC3 (AFC3) of Arabidopsis thaliana (Mouse-ear cress).